A 328-amino-acid chain; its full sequence is Tetraacyldisaccharide 4'-kinase (328 aa).

Residue Thr-58–Thr-65 participates in ATP binding.

Belongs to the LpxK family.

It catalyses the reaction a lipid A disaccharide + ATP = a lipid IVA + ADP + H(+). It functions in the pathway glycolipid biosynthesis; lipid IV(A) biosynthesis; lipid IV(A) from (3R)-3-hydroxytetradecanoyl-[acyl-carrier-protein] and UDP-N-acetyl-alpha-D-glucosamine: step 6/6. Functionally, transfers the gamma-phosphate of ATP to the 4'-position of a tetraacyldisaccharide 1-phosphate intermediate (termed DS-1-P) to form tetraacyldisaccharide 1,4'-bis-phosphate (lipid IVA). The sequence is that of Tetraacyldisaccharide 4'-kinase from Phenylobacterium zucineum (strain HLK1).